Here is a 142-residue protein sequence, read N- to C-terminus: uncharacterized protein (142 aa).

The interval 1–31 (MSLPKKKKPEVEEEEKPEEEEEKEEEQEIDI) is disordered. Residues 11-29 (VEEEEKPEEEEEKEEEQEI) are compositionally biased toward acidic residues.

This is an uncharacterized protein from Acidianus sp. F28 (AFV-2).